The chain runs to 82 residues: Cytochrome c oxidase subunit 8, mitochondrial (82 aa).

A mitochondrion-targeting transit peptide spans 1–31 (MFSRVALRAAPRQQPFSLVARRTFQTTRAQL). Over 32 to 52 (SSPYHYPEGPRSNLPFNPKTR) the chain is Mitochondrial matrix. A helical transmembrane segment spans residues 53–75 (FFWFRYLMYCVVGFGSPVAIAVW). Residues 76–82 (QTYRPRS) lie on the Mitochondrial intermembrane side of the membrane.

This sequence belongs to the cytochrome c oxidase VIIc family. Component of the cytochrome c oxidase (complex IV, CIV), a multisubunit enzyme composed of 11 subunits. The complex is composed of a catalytic core of 3 subunits Cox1, Cox2 and Cox3, encoded in the mitochondrial DNA, and 8 supernumerary subunits Cox4, Cox5a/Cox5, Cox6, Cox7, Cox8, Cox7a/Cox9, Cox6b/Cox12 and Cox6a/Cox13, which are encoded in the nuclear genome. The complex exists as a monomer or a dimer and forms respiratory supercomplexes (SCs) in the inner mitochondrial membrane with NADH-ubiquinone oxidoreductase (complex I, CI) and ubiquinol-cytochrome c oxidoreductase (cytochrome b-c1 complex, complex III, CIII), resulting in various different assemblies (supercomplexes I(1)IV(1), I(1)III(3)IV(2), III(2)IV(1) and III(2)IV(2) as well as larger supercomplexes of compositions like I(1)III(2)IV(5-6)).

Its subcellular location is the mitochondrion inner membrane. It participates in energy metabolism; oxidative phosphorylation. Its function is as follows. Component of the cytochrome c oxidase, the last enzyme in the mitochondrial electron transport chain which drives oxidative phosphorylation. The respiratory chain contains 3 multisubunit complexes succinate dehydrogenase (complex II, CII), ubiquinol-cytochrome c oxidoreductase (cytochrome b-c1 complex, complex III, CIII) and cytochrome c oxidase (complex IV, CIV), that cooperate to transfer electrons derived from NADH and succinate to molecular oxygen, creating an electrochemical gradient over the inner membrane that drives transmembrane transport and the ATP synthase. Cytochrome c oxidase is the component of the respiratory chain that catalyzes the reduction of oxygen to water. Electrons originating from reduced cytochrome c in the intermembrane space (IMS) are transferred via the dinuclear copper A center (CU(A)) of Cox2 and heme A of Cox1 to the active site in Cox1, a binuclear center (BNC) formed by heme A3 and copper B (CU(B)). The BNC reduces molecular oxygen to 2 water molecules using 4 electrons from cytochrome c in the IMS and 4 protons from the mitochondrial matrix. This chain is Cytochrome c oxidase subunit 8, mitochondrial (cox-15), found in Neurospora crassa (strain ATCC 24698 / 74-OR23-1A / CBS 708.71 / DSM 1257 / FGSC 987).